Reading from the N-terminus, the 1202-residue chain is DNA-directed RNA polymerase subunit beta (1202 aa).

The span at 1151–1162 (LRDMDEEDDDVV) shows a compositional bias: acidic residues. The interval 1151-1202 (LRDMDEEDDDVVNVDALSKYAEKQNEKTNASAEEAKAPSTESAPVETKNNQN) is disordered. Over residues 1189 to 1202 (STESAPVETKNNQN) the composition is skewed to polar residues.

The protein belongs to the RNA polymerase beta chain family. The RNAP catalytic core consists of 2 alpha, 1 beta, 1 beta' and 1 omega subunit. When a sigma factor is associated with the core the holoenzyme is formed, which can initiate transcription.

It catalyses the reaction RNA(n) + a ribonucleoside 5'-triphosphate = RNA(n+1) + diphosphate. In terms of biological role, DNA-dependent RNA polymerase catalyzes the transcription of DNA into RNA using the four ribonucleoside triphosphates as substrates. The polypeptide is DNA-directed RNA polymerase subunit beta (Pediococcus pentosaceus (strain ATCC 25745 / CCUG 21536 / LMG 10740 / 183-1w)).